A 164-amino-acid polypeptide reads, in one-letter code: Transmembrane protein B169L (164 aa).

A run of 2 helical transmembrane segments spans residues 28 to 48 and 60 to 80; these read NPFI…FAIC and TAIY…YVLN. Residue Asn-88 is glycosylated (N-linked (GlcNAc...) asparagine; by host). The disordered stretch occupies residues 114 to 142; sequence SPPSVPDELEEDRPKMIPAGSKPADFKPA.

It belongs to the asfivirus B169L family.

The protein localises to the host membrane. Its subcellular location is the virion. In Ornithodoros (relapsing fever ticks), this protein is Transmembrane protein B169L.